A 50-amino-acid chain; its full sequence is Insulin (50 aa).

Cystine bridges form between C7–C36, C19–C49, and C35–C40.

This sequence belongs to the insulin family. As to quaternary structure, heterodimer of a B chain and an A chain linked by two disulfide bonds.

It localises to the secreted. Functionally, insulin decreases blood glucose concentration. It increases cell permeability to monosaccharides, amino acids and fatty acids. It accelerates glycolysis, the pentose phosphate cycle, and glycogen synthesis in liver. This Myoxocephalus scorpius (Shorthorn sculpin) protein is Insulin (ins).